The following is a 505-amino-acid chain: uncharacterized protein (505 aa).

The first 19 residues, 1 to 19, serve as a signal peptide directing secretion; the sequence is MILFTAIILVASVVHVVVS. The Extracellular portion of the chain corresponds to 20-483; sequence SPQQCYYCVE…EQPNSAPRGE (464 aa). Residues 484–504 traverse the membrane as a helical segment; that stretch reads IHQLFRCTFVAVFIVFACFIV. Position 505 (Cys-505) is a topological domain, cytoplasmic.

Component of the acid-insoluble and acid-soluble organic matrix of the aragonitic skeleton (at protein level).

The protein resides in the membrane. This is an uncharacterized protein from Acropora millepora (Staghorn coral).